The chain runs to 190 residues: GTP cyclohydrolase 1 (190 aa).

3 residues coordinate Zn(2+): cysteine 75, histidine 78, and cysteine 146.

The protein belongs to the GTP cyclohydrolase I family. As to quaternary structure, toroid-shaped homodecamer, composed of two pentamers of five dimers.

It catalyses the reaction GTP + H2O = 7,8-dihydroneopterin 3'-triphosphate + formate + H(+). It functions in the pathway cofactor biosynthesis; 7,8-dihydroneopterin triphosphate biosynthesis; 7,8-dihydroneopterin triphosphate from GTP: step 1/1. This is GTP cyclohydrolase 1 from Campylobacter curvus (strain 525.92).